Here is a 225-residue protein sequence, read N- to C-terminus: Cytidylate kinase (225 aa).

12–20 contributes to the ATP binding site; sequence GPSGAGKGT.

This sequence belongs to the cytidylate kinase family. Type 1 subfamily.

The protein resides in the cytoplasm. It catalyses the reaction CMP + ATP = CDP + ADP. The catalysed reaction is dCMP + ATP = dCDP + ADP. The sequence is that of Cytidylate kinase from Edwardsiella ictaluri (strain 93-146).